The chain runs to 390 residues: Isotocin receptor (390 aa).

At 1–48 (MEEMFKEQDFWSFNESSRNSTVGNETFGGNQTVNPLKRNEEVAKVEVT) the chain is on the extracellular side. Residues Asn-14, Asn-19, Asn-24, and Asn-30 are each glycosylated (N-linked (GlcNAc...) asparagine). Residues 49-69 (VLALVLFLALAGNLCVLIAIY) form a helical membrane-spanning segment. The Cytoplasmic segment spans residues 70–86 (TAKHTQSRMYYLMKHLS). Residues 87-107 (IADLVVAVFQVLPQLIWDITF) traverse the membrane as a helical segment. Residues 108 to 124 (RFYGPDFLCRLVKYLQT) are Extracellular-facing. Residues Cys-116 and Cys-191 are joined by a disulfide bond. A helical transmembrane segment spans residues 125-145 (VGMFASTYMLVLMSIDRCIAI). The Cytoplasmic segment spans residues 146-160 (CQPLRSLHKRKDRCY). The helical transmembrane segment at 161 to 181 (VIVSWALSLVFSVPQVYIFSL) threads the bilayer. Topologically, residues 182–206 (REIGNGVYDCWGDFVQPWGAKAYIT) are extracellular. Residues 207-227 (WISLTIYIIPVAILGGCYGLI) traverse the membrane as a helical segment. Over 228–276 (SFKIWQNFKRKTKKDQCITLTTAASKANALARVSSVKLVSKAKITTVKM) the chain is Cytoplasmic. Residues 277–297 (TFVIVLAYIVCWTPFFFVQMW) traverse the membrane as a helical segment. Residues 298 to 311 (SAWDPEAPREAMPF) lie on the Extracellular side of the membrane. A helical transmembrane segment spans residues 312–332 (IISMLLASLNSCCNPWIYMFF). Residues 333–390 (AGHLFHDLKQSLLCCSTLYLKSSQCRCDQEHDSRKSNCSTYVIKSTSSQRSITQSSIT) lie on the Cytoplasmic side of the membrane.

The protein belongs to the G-protein coupled receptor 1 family. Vasopressin/oxytocin receptor subfamily. Expressed in brain, intestine, bladder, skeletal muscle, lateral line, gills and kidney.

It localises to the cell membrane. Functionally, binds to isotocin. Can also be activated by vasotocin, mesotocin, oxytocin and Arg-vasopressin, although these have lower potencies than isotocin. Produces an induction of membrane chloride currents indicating that it is coupled to the inositol phosphate/calcium pathway. This chain is Isotocin receptor, found in Catostomus commersonii (White sucker).